A 229-amino-acid polypeptide reads, in one-letter code: Uracil-DNA glycosylase (229 aa).

D64 serves as the catalytic Proton acceptor.

This sequence belongs to the uracil-DNA glycosylase (UDG) superfamily. UNG family.

The protein resides in the cytoplasm. It catalyses the reaction Hydrolyzes single-stranded DNA or mismatched double-stranded DNA and polynucleotides, releasing free uracil.. Its function is as follows. Excises uracil residues from the DNA which can arise as a result of misincorporation of dUMP residues by DNA polymerase or due to deamination of cytosine. This is Uracil-DNA glycosylase from Geobacillus thermodenitrificans (strain NG80-2).